A 678-amino-acid polypeptide reads, in one-letter code: Translation initiation factor eIF2B subunit epsilon (678 aa).

A Phosphothreonine modification is found at threonine 172. The disordered stretch occupies residues 467–489; that stretch reads STNELHLSDSESSETSSSSEEDM. At serine 500 the chain carries Phosphoserine. Threonine 503 carries the post-translational modification Phosphothreonine. The residue at position 506 (serine 506) is a Phosphoserine. One can recognise a W2 domain in the interval 508–674; it reads DFDEGDFNKE…NTAESESESE (167 aa).

The protein belongs to the eIF-2B gamma/epsilon subunits family. In terms of assembly, component of the translation initiation factor 2B (eIF2B) complex which is a heterodecamer of two sets of five different subunits: alpha, beta, gamma, delta and epsilon. Subunits alpha, beta and delta comprise a regulatory subcomplex and subunits epsilon and gamma comprise a catalytic subcomplex. Within the complex, the hexameric regulatory complex resides at the center, with the two heterodimeric catalytic subcomplexes bound on opposite sides.

The protein localises to the cytoplasm. Its subcellular location is the cytosol. In terms of biological role, acts as a component of the translation initiation factor 2B (eIF2B) complex, which catalyzes the exchange of GDP for GTP on the eukaryotic initiation factor 2 (eIF2) complex gamma subunit. Its guanine nucleotide exchange factor activity is repressed when bound to eIF2 complex phosphorylated on the alpha subunit, thereby limiting the amount of methionyl-initiator methionine tRNA available to the ribosome and consequently global translation is repressed. The sequence is that of Translation initiation factor eIF2B subunit epsilon (tif225) from Schizosaccharomyces pombe (strain 972 / ATCC 24843) (Fission yeast).